The following is a 310-amino-acid chain: MKLAFMGTPDFSVPVLAEILAAGHEVVAVYSQPPRKAGRGMAEQPSPVHRFAEEHGIPVFTPVSLKGEAEQQAFASLDLDVAVVVAYGLILPKPVLEAPRLGCLNLHASLLPRWRGAAPIQRAIMAGDAETGVMVMQMEEGLDTGPVLLAERVAIAPDETAGGLHDRLSHIGASLMVRALAALSRGGLAAAPQPEEGVTYARKIEKAEARIDWRRPANELDCHIRGLTPFPGAFFEIARGGETIRVKILRAKPVAKSGEPGKVLDAGESIIIACGEGALEISGLQRAGKAAVTARDFLRGFALKPGESVA.

Residue 109-112 (SLLP) coordinates (6S)-5,6,7,8-tetrahydrofolate.

It belongs to the Fmt family.

It carries out the reaction L-methionyl-tRNA(fMet) + (6R)-10-formyltetrahydrofolate = N-formyl-L-methionyl-tRNA(fMet) + (6S)-5,6,7,8-tetrahydrofolate + H(+). Its function is as follows. Attaches a formyl group to the free amino group of methionyl-tRNA(fMet). The formyl group appears to play a dual role in the initiator identity of N-formylmethionyl-tRNA by promoting its recognition by IF2 and preventing the misappropriation of this tRNA by the elongation apparatus. The polypeptide is Methionyl-tRNA formyltransferase (Parvibaculum lavamentivorans (strain DS-1 / DSM 13023 / NCIMB 13966)).